The following is a 326-amino-acid chain: Beta-ketoacyl-[acyl-carrier-protein] synthase III (326 aa).

Residues C115 and H253 contribute to the active site. The segment at 254–258 (QANKR) is ACP-binding. N283 is an active-site residue.

This sequence belongs to the thiolase-like superfamily. FabH family. In terms of assembly, homodimer.

It is found in the cytoplasm. The enzyme catalyses malonyl-[ACP] + acetyl-CoA + H(+) = 3-oxobutanoyl-[ACP] + CO2 + CoA. It functions in the pathway lipid metabolism; fatty acid biosynthesis. Catalyzes the condensation reaction of fatty acid synthesis by the addition to an acyl acceptor of two carbons from malonyl-ACP. Catalyzes the first condensation reaction which initiates fatty acid synthesis and may therefore play a role in governing the total rate of fatty acid production. Possesses both acetoacetyl-ACP synthase and acetyl transacylase activities. Its substrate specificity determines the biosynthesis of branched-chain and/or straight-chain of fatty acids. The sequence is that of Beta-ketoacyl-[acyl-carrier-protein] synthase III from Bradyrhizobium diazoefficiens (strain JCM 10833 / BCRC 13528 / IAM 13628 / NBRC 14792 / USDA 110).